A 107-amino-acid chain; its full sequence is Iron-binding protein IscA (107 aa).

The Fe cation site is built by C35, C99, and C101.

The protein belongs to the HesB/IscA family. In terms of assembly, homodimer; may form tetramers and higher multimers. It depends on Fe cation as a cofactor.

Functionally, is able to transfer iron-sulfur clusters to apo-ferredoxin. Multiple cycles of [2Fe2S] cluster formation and transfer are observed, suggesting that IscA acts catalytically. Recruits intracellular free iron so as to provide iron for the assembly of transient iron-sulfur cluster in IscU in the presence of IscS, L-cysteine and the thioredoxin reductase system TrxA/TrxB. This chain is Iron-binding protein IscA, found in Salmonella agona (strain SL483).